A 135-amino-acid chain; its full sequence is uncharacterized protein (135 aa).

The chain crosses the membrane as a helical span at residues 35–55 (VVLVLIGATIILVVISVLVVS).

The protein resides in the membrane. This is an uncharacterized protein from Saccharomyces cerevisiae (strain ATCC 204508 / S288c) (Baker's yeast).